Consider the following 81-residue polypeptide: Large ribosomal subunit protein bL31B (81 aa).

Belongs to the bacterial ribosomal protein bL31 family. Type B subfamily. Part of the 50S ribosomal subunit.

The protein is Large ribosomal subunit protein bL31B of Bacillus licheniformis (strain ATCC 14580 / DSM 13 / JCM 2505 / CCUG 7422 / NBRC 12200 / NCIMB 9375 / NCTC 10341 / NRRL NRS-1264 / Gibson 46).